A 160-amino-acid polypeptide reads, in one-letter code: Dihydrofolate reductase (160 aa).

In terms of domain architecture, DHFR spans 1–160 (MLIAIWAMTQ…NVNYYRKKQQ (160 aa)). 5–7 (IWA) provides a ligand contact to substrate. Residues 6–7 (WA) and 14–19 (IGNNNT) contribute to the NADP(+) site. E27 contributes to the substrate binding site. 43–46 (GRKT) is a binding site for NADP(+). R57 is a substrate binding site. NADP(+) contacts are provided by residues 62-65 (LSKD) and 101-106 (CGGKSV). S120 provides a ligand contact to substrate.

It belongs to the dihydrofolate reductase family.

The catalysed reaction is (6S)-5,6,7,8-tetrahydrofolate + NADP(+) = 7,8-dihydrofolate + NADPH + H(+). Its pathway is cofactor biosynthesis; tetrahydrofolate biosynthesis; 5,6,7,8-tetrahydrofolate from 7,8-dihydrofolate: step 1/1. Functionally, key enzyme in folate metabolism. Catalyzes an essential reaction for de novo glycine and purine synthesis, and for DNA precursor synthesis. In Mycoplasma genitalium (strain ATCC 33530 / DSM 19775 / NCTC 10195 / G37) (Mycoplasmoides genitalium), this protein is Dihydrofolate reductase (folA).